Consider the following 214-residue polypeptide: Phosphatidylcholine transfer protein (214 aa).

Met1 carries the post-translational modification N-acetylmethionine. Residues 1–212 form the START domain; the sequence is MAGPAAHFSD…MVKACQNYHK (212 aa). Positions 72 and 78 each coordinate a 1,2-diacyl-sn-glycero-3-phosphocholine. At Ser139 the chain carries Phosphoserine. Gln157 contributes to the a 1,2-diacyl-sn-glycero-3-phosphocholine binding site.

As to quaternary structure, interacts with ACOT13/THEM2.

It is found in the cytoplasm. Functionally, lipid transfer protein that promotes intermembrane transfer of phosphatidylcholines but no other phospholipids. Binds a single lipid molecule. May play a role in hepatocellular selection and transport of phosphatidylcholines during bile formation. This Rattus norvegicus (Rat) protein is Phosphatidylcholine transfer protein (Pctp).